A 55-amino-acid chain; its full sequence is Sec-independent protein translocase protein TatA (55 aa).

A helical membrane pass occupies residues 1 to 21 (MGMSFSHLLIVLLIIFVLFGA).

It belongs to the TatA/E family. The Tat system comprises two distinct complexes: a TatABC complex, containing multiple copies of TatA, TatB and TatC subunits, and a separate TatA complex, containing only TatA subunits. Substrates initially bind to the TatABC complex, which probably triggers association of the separate TatA complex to form the active translocon.

The protein localises to the cell inner membrane. Functionally, part of the twin-arginine translocation (Tat) system that transports large folded proteins containing a characteristic twin-arginine motif in their signal peptide across membranes. TatA could form the protein-conducting channel of the Tat system. The protein is Sec-independent protein translocase protein TatA of Rickettsia peacockii (strain Rustic).